Here is a 158-residue protein sequence, read N- to C-terminus: Transcription elongation factor GreA (158 aa).

A coiled-coil region spans residues 3-75 (TEKTYPMTQE…TQLENMIRNA (73 aa)).

This sequence belongs to the GreA/GreB family.

Necessary for efficient RNA polymerase transcription elongation past template-encoded arresting sites. The arresting sites in DNA have the property of trapping a certain fraction of elongating RNA polymerases that pass through, resulting in locked ternary complexes. Cleavage of the nascent transcript by cleavage factors such as GreA or GreB allows the resumption of elongation from the new 3'terminus. GreA releases sequences of 2 to 3 nucleotides. This is Transcription elongation factor GreA from Bacillus cytotoxicus (strain DSM 22905 / CIP 110041 / 391-98 / NVH 391-98).